Consider the following 334-residue polypeptide: S-adenosylmethionine decarboxylase proenzyme 1 (334 aa).

F7 serves as a coordination point for substrate. Active-site residues include E8 and E11. Residue E67 coordinates substrate. Catalysis depends on S68, which acts as the Schiff-base intermediate with substrate; via pyruvic acid. S68 carries the post-translational modification Pyruvic acid (Ser); by autocatalysis. Catalysis depends on C82, which acts as the Proton donor; for catalytic activity. Residue F223 participates in substrate binding. Catalysis depends on proton acceptor; for processing activity residues S229 and H243. E247 serves as a coordination point for substrate. Residue S298 is modified to Phosphoserine.

The protein belongs to the eukaryotic AdoMetDC family. As to quaternary structure, heterotetramer of two alpha and two beta chains. It depends on pyruvate as a cofactor. In terms of processing, is synthesized initially as an inactive proenzyme. Formation of the active enzyme involves a self-maturation process in which the active site pyruvoyl group is generated from an internal serine residue via an autocatalytic post-translational modification. Two non-identical subunits are generated from the proenzyme in this reaction, and the pyruvate is formed at the N-terminus of the alpha chain, which is derived from the carboxyl end of the proenzyme. The post-translation cleavage follows an unusual pathway, termed non-hydrolytic serinolysis, in which the side chain hydroxyl group of the serine supplies its oxygen atom to form the C-terminus of the beta chain, while the remainder of the serine residue undergoes an oxidative deamination to produce ammonia and the pyruvoyl group blocking the N-terminus of the alpha chain. In terms of tissue distribution, expressed in embryonic stem cells; subsequently down-regulated in differentiating neural precursor cells.

It catalyses the reaction S-adenosyl-L-methionine + H(+) = S-adenosyl 3-(methylsulfanyl)propylamine + CO2. Its pathway is amine and polyamine biosynthesis; S-adenosylmethioninamine biosynthesis; S-adenosylmethioninamine from S-adenosyl-L-methionine: step 1/1. Functionally, essential for biosynthesis of the polyamines spermidine and spermine. Promotes maintenance and self-renewal of embryonic stem cells, by maintaining spermine levels. In Mus musculus (Mouse), this protein is S-adenosylmethionine decarboxylase proenzyme 1 (Amd1).